The primary structure comprises 451 residues: uncharacterized protein (451 aa).

Positions 1-18 are cleaved as a signal peptide; the sequence is MRTRITLALAVLLLLLAG. Cys-19 carries the N-palmitoyl cysteine lipid modification. Cys-19 carries S-diacylglycerol cysteine lipidation. The segment at 424-451 is disordered; the sequence is TSADPPPGVPRAGKRNIRDATSRLPSTP.

The protein localises to the cell membrane. Its function is as follows. May participate in oleandomycin glycosylation and secretion during antibiotic production. This is an uncharacterized protein from Streptomyces antibioticus.